We begin with the raw amino-acid sequence, 316 residues long: 1-aminocyclopropane-1-carboxylate oxidase 4 (316 aa).

The Fe2OG dioxygenase domain occupies 153 to 253 (PNFGTKVSNY…RMSLASFYNP (101 aa)). The Fe cation site is built by histidine 177, aspartate 179, and histidine 234.

The protein belongs to the iron/ascorbate-dependent oxidoreductase family. The cofactor is Fe cation. Expressed in all of the floral organs examined apart from the sepals.

It catalyses the reaction 1-aminocyclopropane-1-carboxylate + L-ascorbate + O2 = ethene + L-dehydroascorbate + hydrogen cyanide + CO2 + 2 H2O. It participates in alkene biosynthesis; ethylene biosynthesis via S-adenosyl-L-methionine; ethylene from S-adenosyl-L-methionine: step 2/2. This chain is 1-aminocyclopropane-1-carboxylate oxidase 4 (ACO4), found in Solanum lycopersicum (Tomato).